The chain runs to 128 residues: UPF0325 protein YaeH (128 aa).

It belongs to the UPF0325 family.

The polypeptide is UPF0325 protein YaeH (Escherichia fergusonii (strain ATCC 35469 / DSM 13698 / CCUG 18766 / IAM 14443 / JCM 21226 / LMG 7866 / NBRC 102419 / NCTC 12128 / CDC 0568-73)).